Consider the following 461-residue polypeptide: Acetylcholine receptor subunit alpha (461 aa).

An N-terminal signal peptide occupies residues 1 to 24 (MILCSYWHVGLVLLLFSCCGLVLG). Over 25–234 (SEHETRLVAN…ITYHFIMQRI (210 aa)) the chain is Extracellular. Disulfide bonds link Cys-152/Cys-166 and Cys-216/Cys-217. Residue Asn-165 is glycosylated (N-linked (GlcNAc...) asparagine). The next 3 membrane-spanning stretches (helical) occupy residues 235–259 (PLYF…VFYL), 267–285 (MTLS…LVIV), and 301–320 (YMLF…VVVI). Over 321 to 432 (NTHHRSPSTH…WKYVAMVIDH (112 aa)) the chain is Cytoplasmic. The helical transmembrane segment at 433-451 (ILLCVFMLICIIGTVSVFA) threads the bilayer.

Belongs to the ligand-gated ion channel (TC 1.A.9) family. Acetylcholine receptor (TC 1.A.9.1) subfamily. Alpha-1/CHRNA1 sub-subfamily. Pentamer of two alpha chains, and one each of the beta, delta, and gamma chains.

It localises to the postsynaptic cell membrane. Its subcellular location is the cell membrane. The enzyme catalyses K(+)(in) = K(+)(out). The catalysed reaction is Na(+)(in) = Na(+)(out). Upon acetylcholine binding, the AChR responds by an extensive change in conformation that affects all subunits and leads to opening of an ion-conducting channel across the plasma membrane. The sequence is that of Acetylcholine receptor subunit alpha (CHRNA1) from Torpedo marmorata (Marbled electric ray).